Consider the following 332-residue polypeptide: CXADR-like membrane protein (332 aa).

A signal peptide spans Met1–Ala19. Ig-like C2-type domains lie at Gln20–Thr123 and Pro130–Thr220. Residues Gln20–Ala231 lie on the Extracellular side of the membrane. Cystine bridges form between Cys35/Cys109 and Cys151/Cys204. Asn193 carries N-linked (GlcNAc...) asparagine glycosylation. A helical membrane pass occupies residues Gly232–Phe252. The Cytoplasmic portion of the chain corresponds to His253–Ile332. The interval Pro276–Ile332 is disordered. A compositionally biased stretch (low complexity) spans Ser285–Ser310. The segment covering Pro320–Ile332 has biased composition (basic and acidic residues).

It is found in the cell junction. The protein localises to the tight junction. The protein resides in the cell membrane. The sequence is that of CXADR-like membrane protein (clmp) from Xenopus tropicalis (Western clawed frog).